We begin with the raw amino-acid sequence, 414 residues long: Putative polyketide beta-ketoacyl synthase 2 (414 aa).

The 404-residue stretch at 4–407 (PRRAVVTGLG…GNNSALVLRR (404 aa)) folds into the Ketosynthase family 3 (KS3) domain.

It belongs to the thiolase-like superfamily. Beta-ketoacyl-ACP synthases family.

Its function is as follows. Involved in developmentally regulated synthesis of a compound biosynthetically related to polyketide antibiotics which is essential for spore color in Streptomyces halstedii. The protein is Putative polyketide beta-ketoacyl synthase 2 (sch2) of Streptomyces halstedii.